A 215-amino-acid chain; its full sequence is Phosphatidylserine decarboxylase proenzyme (215 aa).

The active-site Schiff-base intermediate with substrate; via pyruvic acid is Ser-184. Ser-184 carries the pyruvic acid (Ser); by autocatalysis modification.

Belongs to the phosphatidylserine decarboxylase family. PSD-A subfamily. As to quaternary structure, heterodimer of a large membrane-associated beta subunit and a small pyruvoyl-containing alpha subunit. The cofactor is pyruvate. Post-translationally, is synthesized initially as an inactive proenzyme. Formation of the active enzyme involves a self-maturation process in which the active site pyruvoyl group is generated from an internal serine residue via an autocatalytic post-translational modification. Two non-identical subunits are generated from the proenzyme in this reaction, and the pyruvate is formed at the N-terminus of the alpha chain, which is derived from the carboxyl end of the proenzyme. The post-translation cleavage follows an unusual pathway, termed non-hydrolytic serinolysis, in which the side chain hydroxyl group of the serine supplies its oxygen atom to form the C-terminus of the beta chain, while the remainder of the serine residue undergoes an oxidative deamination to produce ammonia and the pyruvoyl prosthetic group on the alpha chain.

Its subcellular location is the cell membrane. The enzyme catalyses a 1,2-diacyl-sn-glycero-3-phospho-L-serine + H(+) = a 1,2-diacyl-sn-glycero-3-phosphoethanolamine + CO2. The protein operates within phospholipid metabolism; phosphatidylethanolamine biosynthesis; phosphatidylethanolamine from CDP-diacylglycerol: step 2/2. Functionally, catalyzes the formation of phosphatidylethanolamine (PtdEtn) from phosphatidylserine (PtdSer). This Ralstonia pickettii (strain 12J) protein is Phosphatidylserine decarboxylase proenzyme.